A 293-amino-acid chain; its full sequence is AA9 family lytic polysaccharide monooxygenase E (293 aa).

The signal sequence occupies residues 1–19 (MKGLLSVAALSLAVSEVSA). The Cu(2+) site is built by His-20 and His-90. Cysteines 59 and 172 form a disulfide. His-158 and Gln-167 together coordinate O2. Tyr-169 contacts Cu(2+). Residues 257 to 293 (CAVAKWGQCGGNGWTGCTTCAAGSTCNTQNAYYHQCV) enclose the CBM1 domain.

This sequence belongs to the polysaccharide monooxygenase AA9 family. It depends on Cu(2+) as a cofactor.

The protein resides in the secreted. The catalysed reaction is [(1-&gt;4)-beta-D-glucosyl]n+m + reduced acceptor + O2 = 4-dehydro-beta-D-glucosyl-[(1-&gt;4)-beta-D-glucosyl]n-1 + [(1-&gt;4)-beta-D-glucosyl]m + acceptor + H2O.. Glucose dehydrogenase and aryl-alcohol quinone oxidoreductases regulate the oxidative degradation of cellulose since they can act as catalytically efficient electron donors for LPMO9E. Lytic polysaccharide monooxygenase (LPMO) that depolymerizes crystalline and amorphous polysaccharides via the oxidation of scissile alpha- or beta-(1-4)-glycosidic bonds, yielding only C1 oxidation products. Catalysis by LPMOs requires the reduction of the active-site copper from Cu(II) to Cu(I) by a reducing agent and H(2)O(2) or O(2) as a cosubstrate. Improves the progression of lytic enzymes in delignified miscanthus cell walls. This boosting effect dependents on the cellular type which indicates contrasted recalcitrance levels in plant tissues. The chain is AA9 family lytic polysaccharide monooxygenase E from Podospora anserina (strain S / ATCC MYA-4624 / DSM 980 / FGSC 10383) (Pleurage anserina).